The following is an 814-amino-acid chain: Tax1-binding protein 1 homolog (814 aa).

A phosphoserine mark is found at Ser124, Ser138, and Ser225. Positions 144-623 (TTKAGLLELK…KELTKSLEDQ (480 aa)) form a coiled coil. Positions 320–420 (EEISKLQSCL…ELQLHAVKKD (101 aa)) are oligomerization. The residue at position 619 (Ser619) is a Phosphoserine; by IKKA. Phosphoserine is present on Ser632. The residue at position 693 (Ser693) is a Phosphoserine; by IKKA. The tract at residues 701–733 (SQPARNLSRPDGLEDPEDSREDENVPIPPDPAN) is disordered. UBZ1-type zinc fingers lie at residues 752–778 (HKKCPLCELMFPPNYDQTKFEEHVESH) and 779–805 (WKVCPMCSEQFPPDYDQQGFERHVQTH). Residues Cys755, Cys758, His774, His778, Cys782, Cys785, His801, and His805 each coordinate Zn(2+).

As to quaternary structure, homooligomer. Interacts with TNFAIP3. Interacts with STARD13. Interacts with MYO6. Interacts with TOM1; the interaction is indirect and is mediated by MYO6, which acts as a bridge between TOM1 and TAX1BP1. Interacts with MAVS; this interaction induces MAVS polyubiquitination. Interacts with TNIP1. Interacts with TRAF6; this interaction mediates deubiquitination of TRAF6 and inhibition of NF-kappa-B activation. Interacts with RIPK1; this interaction negatively regulates RIPK1 ubiquitination. Interacts with NBR1. Interacts with TBK1. Interacts with RB1CC1. Interacts with SQSTM1. Interacts with AZI2. Interacts with TICAM1 and TRIM32; these interactions target TICAM1 to TAX1BP1-mediated selective autophagic degradation. Post-translationally, phosphorylated in the C-terminal region by CHUK/IKKA leading to NF-kappa-B signaling down-regulation.

Its subcellular location is the cytoplasm. The protein localises to the mitochondrion. It localises to the preautophagosomal structure. It is found in the cytoplasmic vesicle. The protein resides in the autophagosome. Ubiquitin-binding adapter that participates in inflammatory, antiviral and innate immune processes as well as selective autophagy regulation. Plays a key role in the negative regulation of NF-kappa-B and IRF3 signalings by acting as an adapter for the ubiquitin-editing enzyme A20/TNFAIP3 to bind and inactivate its substrates. Disrupts the interactions between the E3 ubiquitin ligase TRAF3 and TBK1/IKBKE to attenuate 'Lys63'-linked polyubiquitination of TBK1 and thereby IFN-beta production. Also recruits A20/TNFAIP3 to ubiquitinated signaling proteins TRAF6 and RIPK1, leading to their deubiquitination and disruption of IL-1 and TNF-induced NF-kappa-B signaling pathways. Inhibits virus-induced apoptosis by inducing the 'Lys-48'-linked polyubiquitination and degradation of MAVS via recruitment of the E3 ligase ITCH, thereby attenuating MAVS-mediated apoptosis signaling. As a macroautophagy/autophagy receptor, facilitates the xenophagic clearance of pathogenic bacteria such as Salmonella typhimurium and Mycobacterium tuberculosis. Upon NBR1 recruitment to the SQSTM1-ubiquitin condensates, acts as the major recruiter of RB1CC1 to these ubiquitin condensates to promote their autophagic degradation. Mediates the autophagic degradation of other substrates including TICAM1. This Mus musculus (Mouse) protein is Tax1-binding protein 1 homolog (Tax1bp1).